Here is a 338-residue protein sequence, read N- to C-terminus: Glyceraldehyde-3-phosphate dehydrogenase 2 (338 aa).

NAD(+) is bound by residues 12–13, D34, and R79; that span reads RI. D-glyceraldehyde 3-phosphate-binding positions include 150–152, T181, 210–211, and R233; these read SCT and TG. Catalysis depends on C151, which acts as the Nucleophile. N315 serves as a coordination point for NAD(+).

This sequence belongs to the glyceraldehyde-3-phosphate dehydrogenase family. As to quaternary structure, homotetramer.

It localises to the cytoplasm. The enzyme catalyses D-glyceraldehyde 3-phosphate + phosphate + NAD(+) = (2R)-3-phospho-glyceroyl phosphate + NADH + H(+). Its pathway is carbohydrate degradation; glycolysis; pyruvate from D-glyceraldehyde 3-phosphate: step 1/5. This Mucor circinelloides f. lusitanicus (Mucor racemosus var. lusitanicus) protein is Glyceraldehyde-3-phosphate dehydrogenase 2 (GPD2).